The sequence spans 109 residues: Large ribosomal subunit protein uL23 (109 aa).

This sequence belongs to the universal ribosomal protein uL23 family. In terms of assembly, part of the 50S ribosomal subunit. Contacts protein L29, and trigger factor when it is bound to the ribosome.

Functionally, one of the early assembly proteins it binds 23S rRNA. One of the proteins that surrounds the polypeptide exit tunnel on the outside of the ribosome. Forms the main docking site for trigger factor binding to the ribosome. The polypeptide is Large ribosomal subunit protein uL23 (Haemophilus influenzae (strain PittEE)).